Here is a 255-residue protein sequence, read N- to C-terminus: Small ribosomal subunit protein eS1 (255 aa).

Over residues 1–18 (MAVGKNKRLSKGKKGLKK) the composition is skewed to basic residues. The tract at residues 1–20 (MAVGKNKRLSKGKKGLKKRV) is disordered. Ala2 carries the post-translational modification N-acetylalanine; partial.

The protein belongs to the eukaryotic ribosomal protein eS1 family. Component of the small ribosomal subunit. Mature ribosomes consist of a small (40S) and a large (60S) subunit. The 40S subunit contains about 33 different proteins and 1 molecule of RNA (18S). The 60S subunit contains about 49 different proteins and 3 molecules of RNA (25S, 5.8S and 5S).

It localises to the cytoplasm. In Coccidioides immitis (strain RS) (Valley fever fungus), this protein is Small ribosomal subunit protein eS1.